Consider the following 89-residue polypeptide: NAD(P)H-quinone oxidoreductase subunit L (89 aa).

The next 2 helical transmembrane spans lie at 29–46 and 59–79; these read VLGG…FYWM and LFIY…APFL.

It belongs to the complex I NdhL subunit family. In terms of assembly, NDH-1 can be composed of about 15 different subunits; different subcomplexes with different compositions have been identified which probably have different functions.

It is found in the cellular thylakoid membrane. It catalyses the reaction a plastoquinone + NADH + (n+1) H(+)(in) = a plastoquinol + NAD(+) + n H(+)(out). The catalysed reaction is a plastoquinone + NADPH + (n+1) H(+)(in) = a plastoquinol + NADP(+) + n H(+)(out). NDH-1 shuttles electrons from an unknown electron donor, via FMN and iron-sulfur (Fe-S) centers, to quinones in the respiratory and/or the photosynthetic chain. The immediate electron acceptor for the enzyme in this species is believed to be plastoquinone. Couples the redox reaction to proton translocation, and thus conserves the redox energy in a proton gradient. Cyanobacterial NDH-1 also plays a role in inorganic carbon-concentration. The protein is NAD(P)H-quinone oxidoreductase subunit L of Prochlorococcus marinus (strain NATL1A).